The sequence spans 214 residues: MSKPLTIALSKGRILKETLPLLKAAGIELLEDPAASRKLIFDTTRDDVKIIIIRATDVPPYVQHGAADIGVAGKDVLMEHGGDGVFEPVDLDIARCKLMVAAMKDAPETGSRLRVATKFVNVAKAYYAQQGKQAEVIKLYGAMELAPLVGLADRIVDIVDTGNTLRANGLEPTELIAHISTRVIVNRASMKTRHSDIQTILDKLVEAVASRKAG.

It belongs to the ATP phosphoribosyltransferase family. Short subfamily. Heteromultimer composed of HisG and HisZ subunits.

The protein localises to the cytoplasm. The catalysed reaction is 1-(5-phospho-beta-D-ribosyl)-ATP + diphosphate = 5-phospho-alpha-D-ribose 1-diphosphate + ATP. The protein operates within amino-acid biosynthesis; L-histidine biosynthesis; L-histidine from 5-phospho-alpha-D-ribose 1-diphosphate: step 1/9. Its function is as follows. Catalyzes the condensation of ATP and 5-phosphoribose 1-diphosphate to form N'-(5'-phosphoribosyl)-ATP (PR-ATP). Has a crucial role in the pathway because the rate of histidine biosynthesis seems to be controlled primarily by regulation of HisG enzymatic activity. This chain is ATP phosphoribosyltransferase, found in Alcanivorax borkumensis (strain ATCC 700651 / DSM 11573 / NCIMB 13689 / SK2).